Reading from the N-terminus, the 845-residue chain is Protein P (845 aa).

A terminal protein domain (TP) region spans residues 1-179 (MPLSYQHFRK…FCGSPYSWEQ (179 aa)). The spacer stretch occupies residues 180-348 (ELQHGRLVIK…YCLSHLVNLR (169 aa)). Residues 226-245 (GLQPHQGPLASSQPGRSGSI) form a disordered region. Residues 349–692 (EDWGPCDEHG…YMNLYPVARQ (344 aa)) form a polymerase/reverse transcriptase domain (RT) region. The Reverse transcriptase domain occupies 359–602 (EHHIRIPRTP…YSLNFMGYII (244 aa)). 3 residues coordinate Mg(2+): aspartate 431, aspartate 553, and aspartate 554.

Belongs to the hepadnaviridae P protein family.

It catalyses the reaction DNA(n) + a 2'-deoxyribonucleoside 5'-triphosphate = DNA(n+1) + diphosphate. The enzyme catalyses Endonucleolytic cleavage to 5'-phosphomonoester.. Activated by host HSP70 and HSP40 in vitro to be able to bind the epsilon loop of the pgRNA. Because deletion of the RNase H region renders the protein partly chaperone-independent, the chaperones may be needed indirectly to relieve occlusion of the RNA-binding site by this domain. Inhibited by several reverse-transcriptase inhibitors: Lamivudine, Adefovir and Entecavir. Its function is as follows. Multifunctional enzyme that converts the viral RNA genome into dsDNA in viral cytoplasmic capsids. This enzyme displays a DNA polymerase activity that can copy either DNA or RNA templates, and a ribonuclease H (RNase H) activity that cleaves the RNA strand of RNA-DNA heteroduplexes in a partially processive 3'- to 5'-endonucleasic mode. Neo-synthesized pregenomic RNA (pgRNA) are encapsidated together with the P protein, and reverse-transcribed inside the nucleocapsid. Initiation of reverse-transcription occurs first by binding the epsilon loop on the pgRNA genome, and is initiated by protein priming, thereby the 5'-end of (-)DNA is covalently linked to P protein. Partial (+)DNA is synthesized from the (-)DNA template and generates the relaxed circular DNA (RC-DNA) genome. After budding and infection, the RC-DNA migrates in the nucleus, and is converted into a plasmid-like covalently closed circular DNA (cccDNA). The activity of P protein does not seem to be necessary for cccDNA generation, and is presumably released from (+)DNA by host nuclear DNA repair machinery. This chain is Protein P, found in Homo sapiens (Human).